Consider the following 266-residue polypeptide: Exosome complex component Rrp42 (266 aa).

The protein belongs to the RNase PH family. Rrp42 subfamily. In terms of assembly, component of the archaeal exosome complex. Forms a hexameric ring-like arrangement composed of 3 Rrp41-Rrp42 heterodimers. The hexameric ring associates with a trimer of Rrp4 and/or Csl4 subunits.

Its subcellular location is the cytoplasm. Functionally, non-catalytic component of the exosome, which is a complex involved in RNA degradation. Contributes to the structuring of the Rrp41 active site. This is Exosome complex component Rrp42 from Methanosarcina acetivorans (strain ATCC 35395 / DSM 2834 / JCM 12185 / C2A).